We begin with the raw amino-acid sequence, 262 residues long: Adenosine deaminase RL5 (262 aa).

The Cu cation site is built by N36, Y40, M68, H73, C75, N114, C118, H135, C172, C175, C234, and C237.

This sequence belongs to the purine nucleoside phosphorylase YfiH/LACC1 family. Homodimer. The cofactor is Cu cation.

It catalyses the reaction adenosine + phosphate = alpha-D-ribose 1-phosphate + adenine. The catalysed reaction is S-methyl-5'-thioadenosine + phosphate = 5-(methylsulfanyl)-alpha-D-ribose 1-phosphate + adenine. The enzyme catalyses inosine + phosphate = alpha-D-ribose 1-phosphate + hypoxanthine. It carries out the reaction adenosine + H2O + H(+) = inosine + NH4(+). In terms of biological role, purine nucleoside enzyme that catalyzes the phosphorolysis of adenosine and inosine nucleosides, yielding D-ribose 1-phosphate and the respective free bases, adenine and hypoxanthine. Also catalyzes the phosphorolysis of S-methyl-5'-thioadenosine into adenine and S-methyl-5-thio-alpha-D-ribose 1-phosphate. Also has adenosine deaminase activity. Also acts as a multicopper oxidase able to oxidize a wide variety of polyphenols and related compounds in vitro. Displays substrate preference as follows: syringaldazine &gt; 2,6-dimethoxyphenol &gt; veratryl alcohol &gt; guaiacol &gt; tetramethylbenzidine &gt; 4-methoxybenzyl alcohol &gt; 2,2'-azino-bis(3-ethylbenzthiazoline-6-sulfonic acid) (ABTS) &gt;&gt; phenol red &gt; 1-hydroxybenzotriazole. Cannot use 3,4-dimetoxybenzyl alcohol and violuric acid as substrates. As this enzyme is derived from a rumen microbial community, it may have a role in the digestion of complex plant materials such as ryegrass lignin. The chain is Adenosine deaminase RL5 from Unknown prokaryotic organism.